The following is a 224-amino-acid chain: Dehydration-responsive element-binding protein 1G (224 aa).

Over residues 1-16 the composition is skewed to polar residues; the sequence is MDVSAALSSDYSSGTP. The segment at 1–46 is disordered; it reads MDVSAALSSDYSSGTPSPVAADADDGSSAYMTVSSAPPKRRAGRTK. Residues 54 to 111 constitute a DNA-binding region (AP2/ERF); it reads VFKGVRRRNPGRWVCEVREPHGKQRIWLGTFETAEMAARAHDVAALALRGRAACLNFA.

The protein belongs to the AP2/ERF transcription factor family. ERF subfamily.

The protein resides in the nucleus. Functionally, transcriptional activator that binds specifically to the DNA sequence 5'-[AG]CCGAC-3'. Binding to the C-repeat/DRE element mediates high salinity- and dehydration-inducible transcription. The chain is Dehydration-responsive element-binding protein 1G (DREB1G) from Oryza sativa subsp. indica (Rice).